Consider the following 361-residue polypeptide: Phospho-N-acetylmuramoyl-pentapeptide-transferase (361 aa).

Helical transmembrane passes span 17 to 37 (SIYLRAFLGFVISFCIVLFAG), 66 to 86 (GTPTMGGVLIIAAVLLTSIFI), 90 to 110 (TNSLILLVLLSTIMFAAIGFI), 129 to 149 (LLFQGAIGLIIWAYIYFIGLT), 162 to 182 (ISAYPYYIGAIGLFFLIQIVL), 197 to 217 (GLAIMPMIICSTILGVIAYFT), 232 to 252 (VGSGELSVFLSAVTGAGLGFL), 261 to 281 (IFMGDTGSLTLGGILGVIAII), 286 to 306 (LMLPIMGFIFVLEALSVILQV), and 340 to 360 (FWIGTLIFGIIALGAIKMRGI).

Belongs to the glycosyltransferase 4 family. MraY subfamily. Mg(2+) serves as cofactor.

The protein resides in the cell inner membrane. The catalysed reaction is UDP-N-acetyl-alpha-D-muramoyl-L-alanyl-gamma-D-glutamyl-meso-2,6-diaminopimeloyl-D-alanyl-D-alanine + di-trans,octa-cis-undecaprenyl phosphate = di-trans,octa-cis-undecaprenyl diphospho-N-acetyl-alpha-D-muramoyl-L-alanyl-D-glutamyl-meso-2,6-diaminopimeloyl-D-alanyl-D-alanine + UMP. Its pathway is cell wall biogenesis; peptidoglycan biosynthesis. Functionally, catalyzes the initial step of the lipid cycle reactions in the biosynthesis of the cell wall peptidoglycan: transfers peptidoglycan precursor phospho-MurNAc-pentapeptide from UDP-MurNAc-pentapeptide onto the lipid carrier undecaprenyl phosphate, yielding undecaprenyl-pyrophosphoryl-MurNAc-pentapeptide, known as lipid I. The polypeptide is Phospho-N-acetylmuramoyl-pentapeptide-transferase (Fusobacterium nucleatum subsp. nucleatum (strain ATCC 25586 / DSM 15643 / BCRC 10681 / CIP 101130 / JCM 8532 / KCTC 2640 / LMG 13131 / VPI 4355)).